Here is a 1093-residue protein sequence, read N- to C-terminus: Leukemia inhibitory factor receptor (1093 aa).

The signal sequence occupies residues 1–43 (MGAFSWWRQPSWMADNKRGRMTPSLPWLLSALTLLHLMMHVNG). At 44–829 (LKRGVQQDLK…SMFVVTKENS (786 aa)) the chain is on the extracellular side. The Fibronectin type-III 1 domain maps to 45-127 (KRGVQQDLKC…QSKFTLNEKD (83 aa)). 2 disulfides stabilise this stretch: Cys-54-Cys-64 and Cys-81-Cys-89. N-linked (GlcNAc...) asparagine glycans are attached at residues Asn-165, Asn-200, Asn-239, and Asn-262. Intrachain disulfides connect Cys-209–Cys-266 and Cys-337–Cys-347. Fibronectin type-III domains lie at 331–428 (VPQK…ERVA), 431–530 (VPIS…TEAT), 534–625 (GPDT…IPND), 623–715 (PNDD…IGYI), and 720–829 (PIVA…KENS). N-linked (GlcNAc...) asparagine glycans are attached at residues Asn-386, Asn-403, Asn-422, Asn-441, Asn-454, and Asn-477. Cysteines 462 and 507 form a disulfide. A WSXWS motif motif is present at residues 515 to 519 (WSKWS). N-linked (GlcNAc...) asparagine glycans are attached at residues Asn-568, Asn-648, Asn-659, Asn-676, Asn-725, and Asn-783. The chain crosses the membrane as a helical span at residues 830–850 (VGLIIAILIPVAVAVIVGVVT). Residues 851–1093 (SILCYRKREW…TNFFQNKPND (243 aa)) are Cytoplasmic-facing. The Box 1 motif motif lies at 865–873 (FYPDIPNPE). 2 disordered regions span residues 908–941 (ESRS…ENQA) and 1003–1093 (LPIN…KPND). Phosphoserine occurs at positions 923 and 1040. Polar residues-rich tracts occupy residues 1028 to 1063 (ANVN…NSRQ) and 1082 to 1093 (SFTNFFQNKPND).

It belongs to the type I cytokine receptor family. Type 2 subfamily. Heterodimer composed of LIFR and IL6ST. The heterodimer formed by LIFR and IL6ST interacts with the complex formed by CNTF and CNTFR.

The protein resides in the cell membrane. Functionally, signal-transducing molecule. May have a common pathway with IL6ST. The soluble form inhibits the biological activity of LIF by blocking its binding to receptors on target cells. This Rattus norvegicus (Rat) protein is Leukemia inhibitory factor receptor (Lifr).